Reading from the N-terminus, the 369-residue chain is 4-hydroxy-3-methylbut-2-en-1-yl diphosphate synthase (flavodoxin) (369 aa).

[4Fe-4S] cluster contacts are provided by Cys-270, Cys-273, Cys-305, and Glu-312.

Belongs to the IspG family. Requires [4Fe-4S] cluster as cofactor.

It carries out the reaction (2E)-4-hydroxy-3-methylbut-2-enyl diphosphate + oxidized [flavodoxin] + H2O + 2 H(+) = 2-C-methyl-D-erythritol 2,4-cyclic diphosphate + reduced [flavodoxin]. Its pathway is isoprenoid biosynthesis; isopentenyl diphosphate biosynthesis via DXP pathway; isopentenyl diphosphate from 1-deoxy-D-xylulose 5-phosphate: step 5/6. Converts 2C-methyl-D-erythritol 2,4-cyclodiphosphate (ME-2,4cPP) into 1-hydroxy-2-methyl-2-(E)-butenyl 4-diphosphate. This is 4-hydroxy-3-methylbut-2-en-1-yl diphosphate synthase (flavodoxin) from Haemophilus ducreyi (strain 35000HP / ATCC 700724).